We begin with the raw amino-acid sequence, 190 residues long: UPF0340 protein BC_5317 (190 aa).

Belongs to the UPF0340 family.

The polypeptide is UPF0340 protein BC_5317 (Bacillus cereus (strain ATCC 14579 / DSM 31 / CCUG 7414 / JCM 2152 / NBRC 15305 / NCIMB 9373 / NCTC 2599 / NRRL B-3711)).